The following is a 196-amino-acid chain: Imidazoleglycerol-phosphate dehydratase (196 aa).

The protein belongs to the imidazoleglycerol-phosphate dehydratase family.

It localises to the cytoplasm. It catalyses the reaction D-erythro-1-(imidazol-4-yl)glycerol 3-phosphate = 3-(imidazol-4-yl)-2-oxopropyl phosphate + H2O. It functions in the pathway amino-acid biosynthesis; L-histidine biosynthesis; L-histidine from 5-phospho-alpha-D-ribose 1-diphosphate: step 6/9. This chain is Imidazoleglycerol-phosphate dehydratase, found in Desulfitobacterium hafniense (strain Y51).